The following is a 245-amino-acid chain: NAD-dependent protein deacylase (245 aa).

Residues 1–237 (MNFPYRNIVV…PKLVEELLAH (237 aa)) enclose the Deacetylase sirtuin-type domain. Residue 13–32 (GAGISAESGIQTFRAQDGLW) coordinates NAD(+). Positions 57 and 60 each coordinate substrate. 94 to 97 (QNID) provides a ligand contact to NAD(+). His112 (proton acceptor) is an active-site residue. Zn(2+) contacts are provided by Cys120 and Cys139. Residues 179–181 (GTS), 205–207 (NLE), and Ala223 each bind NAD(+).

It belongs to the sirtuin family. Class III subfamily. Requires Zn(2+) as cofactor.

The protein localises to the cytoplasm. It carries out the reaction N(6)-acetyl-L-lysyl-[protein] + NAD(+) + H2O = 2''-O-acetyl-ADP-D-ribose + nicotinamide + L-lysyl-[protein]. It catalyses the reaction N(6)-succinyl-L-lysyl-[protein] + NAD(+) + H2O = 2''-O-succinyl-ADP-D-ribose + nicotinamide + L-lysyl-[protein]. Its function is as follows. NAD-dependent lysine deacetylase and desuccinylase that specifically removes acetyl and succinyl groups on target proteins. Modulates the activities of several proteins which are inactive in their acylated form. This chain is NAD-dependent protein deacylase, found in Vibrio vulnificus (strain YJ016).